The primary structure comprises 141 residues: Cholinesterase (141 aa).

Residue asparagine 39 is glycosylated (N-linked (GlcNAc...) asparagine). 49-50 (GG) is a substrate binding site. Catalysis depends on serine 131, which acts as the Acyl-ester intermediate. Position 131 is a phosphoserine (serine 131).

This sequence belongs to the type-B carboxylesterase/lipase family. As to quaternary structure, homotetramer; disulfide-linked. Dimer of dimers. In terms of tissue distribution, present in most cells except erythrocytes.

Its subcellular location is the secreted. The catalysed reaction is an acylcholine + H2O = a carboxylate + choline + H(+). Its function is as follows. Esterase with broad substrate specificity. Contributes to the inactivation of the neurotransmitter acetylcholine. Can degrade neurotoxic organophosphate esters. The chain is Cholinesterase (BCHE) from Canis lupus familiaris (Dog).